Here is a 115-residue protein sequence, read N- to C-terminus: Insulin (115 aa).

The N-terminal stretch at 1-22 (MAALWLQSVSLLVLMLVSWSGS) is a signal peptide. 3 disulfide bridges follow: Cys32-Cys101, Cys44-Cys114, and Cys100-Cys105. Positions 56–92 (DVDPLLGFLPAKSGGAAAGGENEVAEFAFKDQMEMMV) are cleaved as a propeptide — c peptide.

This sequence belongs to the insulin family. As to quaternary structure, heterodimer of a B chain and an A chain linked by two disulfide bonds.

The protein localises to the secreted. Functionally, insulin decreases blood glucose concentration. It increases cell permeability to monosaccharides, amino acids and fatty acids. It accelerates glycolysis, the pentose phosphate cycle, and glycogen synthesis in liver. The chain is Insulin (ins) from Verasper moseri (Barfin flounder).